A 219-amino-acid polypeptide reads, in one-letter code: ATP-dependent Clp protease proteolytic subunit (219 aa).

The active-site Nucleophile is S101. H126 is an active-site residue.

This sequence belongs to the peptidase S14 family. Component of the chloroplastic Clp protease core complex.

It localises to the plastid. The protein resides in the chloroplast stroma. The catalysed reaction is Hydrolysis of proteins to small peptides in the presence of ATP and magnesium. alpha-casein is the usual test substrate. In the absence of ATP, only oligopeptides shorter than five residues are hydrolyzed (such as succinyl-Leu-Tyr-|-NHMec, and Leu-Tyr-Leu-|-Tyr-Trp, in which cleavage of the -Tyr-|-Leu- and -Tyr-|-Trp bonds also occurs).. Functionally, cleaves peptides in various proteins in a process that requires ATP hydrolysis. Has a chymotrypsin-like activity. Plays a major role in the degradation of misfolded proteins. The polypeptide is ATP-dependent Clp protease proteolytic subunit (Chara vulgaris (Common stonewort)).